The chain runs to 330 residues: DNA-directed RNA polymerase subunit alpha (330 aa).

An alpha N-terminal domain (alpha-NTD) region spans residues 1–225; the sequence is MSDLAIPTIS…KQFAALVSHN (225 aa). The interval 237 to 330 is alpha C-terminal domain (alpha-CTD); sequence VKYAIPEEKY…KKKNKGMDEA (94 aa).

Belongs to the RNA polymerase alpha chain family. As to quaternary structure, homodimer. The RNAP catalytic core consists of 2 alpha, 1 beta, 1 beta' and 1 omega subunit. When a sigma factor is associated with the core the holoenzyme is formed, which can initiate transcription.

It catalyses the reaction RNA(n) + a ribonucleoside 5'-triphosphate = RNA(n+1) + diphosphate. DNA-dependent RNA polymerase catalyzes the transcription of DNA into RNA using the four ribonucleoside triphosphates as substrates. In Dehalococcoides mccartyi (strain ATCC BAA-2266 / KCTC 15142 / 195) (Dehalococcoides ethenogenes (strain 195)), this protein is DNA-directed RNA polymerase subunit alpha.